A 208-amino-acid chain; its full sequence is Large ribosomal subunit protein uL3 (208 aa).

The residue at position 149 (Q149) is an N5-methylglutamine.

Belongs to the universal ribosomal protein uL3 family. In terms of assembly, part of the 50S ribosomal subunit. Forms a cluster with proteins L14 and L19. Post-translationally, methylated by PrmB.

Its function is as follows. One of the primary rRNA binding proteins, it binds directly near the 3'-end of the 23S rRNA, where it nucleates assembly of the 50S subunit. This chain is Large ribosomal subunit protein uL3, found in Haemophilus influenzae (strain 86-028NP).